We begin with the raw amino-acid sequence, 212 residues long: MPTSYGYTTLLKTTLVCCLLTALVSIFLPALLPLTATGSAAVIIFTLYFFRDPERRIPLDQQVIVAPADGKILLIQPLDHAFTGNDSTLVSIFMSPFNVHVNRIPLDGTIVHLRYVPGKFLMAFDNRSMESNEKMEIGIDNGSLRVLFIQVAGFLARRIVCPLHRNESVLSGKRFGMIKFGSRVDMILPAAVKIMVQSGQKTCAGETIIGRY.

The Schiff-base intermediate with substrate; via pyruvic acid role is filled by serine 182. Serine 182 carries the pyruvic acid (Ser); by autocatalysis modification.

Belongs to the phosphatidylserine decarboxylase family. PSD-A subfamily. As to quaternary structure, heterodimer of a large membrane-associated beta subunit and a small pyruvoyl-containing alpha subunit. Requires pyruvate as cofactor. In terms of processing, is synthesized initially as an inactive proenzyme. Formation of the active enzyme involves a self-maturation process in which the active site pyruvoyl group is generated from an internal serine residue via an autocatalytic post-translational modification. Two non-identical subunits are generated from the proenzyme in this reaction, and the pyruvate is formed at the N-terminus of the alpha chain, which is derived from the carboxyl end of the proenzyme. The post-translation cleavage follows an unusual pathway, termed non-hydrolytic serinolysis, in which the side chain hydroxyl group of the serine supplies its oxygen atom to form the C-terminus of the beta chain, while the remainder of the serine residue undergoes an oxidative deamination to produce ammonia and the pyruvoyl prosthetic group on the alpha chain.

The protein localises to the cell membrane. The catalysed reaction is a 1,2-diacyl-sn-glycero-3-phospho-L-serine + H(+) = a 1,2-diacyl-sn-glycero-3-phosphoethanolamine + CO2. The protein operates within phospholipid metabolism; phosphatidylethanolamine biosynthesis; phosphatidylethanolamine from CDP-diacylglycerol: step 2/2. Its function is as follows. Catalyzes the formation of phosphatidylethanolamine (PtdEtn) from phosphatidylserine (PtdSer). The polypeptide is Phosphatidylserine decarboxylase proenzyme (Chlorobium phaeobacteroides (strain DSM 266 / SMG 266 / 2430)).